We begin with the raw amino-acid sequence, 133 residues long: MAANDTIGDMLTRIRNANLARHQTTQVMSTRMTRSVASVLKDEGFITSFEESGEGVERRLVITLKYRGKNRQPIINTLQRISKPGLRVYSNRRDLPRVLGGIGIAIISTSSGIMTDRDARQTGVGGEVLCYVW.

This sequence belongs to the universal ribosomal protein uS8 family. As to quaternary structure, part of the 30S ribosomal subunit. Contacts proteins S5 and S12.

Functionally, one of the primary rRNA binding proteins, it binds directly to 16S rRNA central domain where it helps coordinate assembly of the platform of the 30S subunit. This Acaryochloris marina (strain MBIC 11017) protein is Small ribosomal subunit protein uS8.